A 366-amino-acid polypeptide reads, in one-letter code: NADH-quinone oxidoreductase subunit D (366 aa).

The protein belongs to the complex I 49 kDa subunit family. In terms of assembly, NDH-1 is composed of 14 different subunits. Subunits NuoB, C, D, E, F, and G constitute the peripheral sector of the complex.

It is found in the cell membrane. The enzyme catalyses a quinone + NADH + 5 H(+)(in) = a quinol + NAD(+) + 4 H(+)(out). Functionally, NDH-1 shuttles electrons from NADH, via FMN and iron-sulfur (Fe-S) centers, to quinones in the respiratory chain. The immediate electron acceptor for the enzyme in this species is believed to be a menaquinone. Couples the redox reaction to proton translocation (for every two electrons transferred, four hydrogen ions are translocated across the cytoplasmic membrane), and thus conserves the redox energy in a proton gradient. In Bacillus mycoides (strain KBAB4) (Bacillus weihenstephanensis), this protein is NADH-quinone oxidoreductase subunit D.